A 1114-amino-acid polypeptide reads, in one-letter code: Zinc finger E-box-binding homeobox 1 (1114 aa).

Disordered stretches follow at residues 1 to 105 (MADG…EVGC) and 142 to 163 (APEEDQRQGTPEASGQDENGTP). The segment covering 15–30 (PRRNNVTNYNNVIEAN) has biased composition (low complexity). Residues 149–160 (QGTPEASGQDEN) show a composition bias toward polar residues. 3 C2H2-type zinc fingers span residues 170–193 (LTCPYCDRGYKRFTSLKEHIKYRH), 200–222 (FSCSLCSYTFAYRTQLDRHMTSH), and 240–262 (FKCTECGKAFKYKHHLKEHLRIH). A C2H2-type 4; atypical zinc finger spans residues 268–292 (YECPNCKKRFSHSGSYSSHISSKKC). Disordered stretches follow at residues 304–326 (SGLKTSQCSSPSLSASPGSPARP), 491–529 (NLKKEHSVPTNSCKNEKLPEDLTVKSEKDKNFEGETNDS), 553–588 (KNPPQLPQSSGTEAEKPSSPAPSETGENNLSPGQPP), and 636–716 (QISV…SRNS). The span at 309-326 (SQCSSPSLSASPGSPARP) shows a compositional bias: low complexity. Basic and acidic residues predominate over residues 504 to 523 (KNEKLPEDLTVKSEKDKNFE). Polar residues-rich tracts occupy residues 573–584 (APSETGENNLSP) and 636–681 (QISV…QNPA). The homeobox; atypical DNA-binding region spans 581 to 640 (NLSPGQPPLKNLLSLLKAYYALNAQPSAEELSKIADSVNLPLDVVKKWFEKMQAGQISVQ). The segment covering 682–716 (NTSKSQTSSGGSTQNGSRSSTPSPSPLNLSSSRNS) has biased composition (low complexity). The CTBP-binding motif signature appears at 767–771 (PLNLT). Polar residues-rich tracts occupy residues 852–866 (AVQETPPKQTQANGS) and 874–890 (SSEGVSNVEDQNDSDST). Residues 852–898 (AVQETPPKQTQANGSQDERQDTSSEGVSNVEDQNDSDSTPPKKKMRK) are disordered. 2 C2H2-type zinc fingers span residues 904–926 (YACDLCDKIFQKSSSLLRHKYEH) and 932–954 (HECGICKKAFKHKHHLIEHMRLH). Residues 960-981 (YQCDKCGKRFSHSGSYSQHMNH) form a C2H2-type 7; atypical zinc finger. The interval 989-1114 (EAEERDSTEQ…QVSEEKTNKA (126 aa)) is disordered. The segment covering 1031-1047 (EEEEDSEKEEEEEEEKD) has biased composition (acidic residues). Positions 1048 to 1062 (VEGLQEEKECRKLQD) are enriched in basic and acidic residues. Positions 1063–1078 (VEEEEEVEEEEEEEEG) are enriched in acidic residues. Residues 1079–1089 (KTEGNKNDDVV) are compositionally biased toward basic and acidic residues.

This sequence belongs to the delta-EF1/ZFH-1 C2H2-type zinc-finger family. In terms of tissue distribution, expression is developmentally regulated with high expression in mesoderm, nervous system and lens.

The protein localises to the nucleus. Its function is as follows. Acts as a transcriptional repressor. Positively regulates neuronal differentiation. Represses transcription by binding to the E box-containing promoter. Binds to delta 1-crystallin enhancer core and represses lens-specific transcription. It also binds many other non-lens specific DNA sequences. This is Zinc finger E-box-binding homeobox 1 (ZEB1) from Gallus gallus (Chicken).